Reading from the N-terminus, the 193-residue chain is dTTP/UTP pyrophosphatase (193 aa).

The active-site Proton acceptor is the Asp71.

The protein belongs to the Maf family. YhdE subfamily. It depends on a divalent metal cation as a cofactor.

Its subcellular location is the cytoplasm. The catalysed reaction is dTTP + H2O = dTMP + diphosphate + H(+). It catalyses the reaction UTP + H2O = UMP + diphosphate + H(+). Nucleoside triphosphate pyrophosphatase that hydrolyzes dTTP and UTP. May have a dual role in cell division arrest and in preventing the incorporation of modified nucleotides into cellular nucleic acids. This is dTTP/UTP pyrophosphatase from Dictyoglomus turgidum (strain DSM 6724 / Z-1310).